The chain runs to 1049 residues: Dyslexia-associated protein KIAA0319-like protein (1049 aa).

Topologically, residues 1-29 (MEKRLGVKPNPASWILSGYYWQTSAKWLR) are cytoplasmic. A helical transmembrane segment spans residues 30–50 (TLYLFYTCFCFSVLWLSTDAS). An MANSC domain is found at 49–127 (ASESRCQQGK…AFRTHSSNSM (79 aa)). The Extracellular portion of the chain corresponds to 51–932 (ESRCQQGKTQ…ESNCEWSVLY (882 aa)). A disordered region spans residues 234–277 (TTDLTAELPGGPKNVSAQPEIPEGLATTPSTQQVKSSEKTQIAV). N247, N395, and N487 each carry an N-linked (GlcNAc...) asparagine glycan. PKD domains follow at residues 310-401 (VVSA…VKPE), 409-498 (IAIV…VNKA), 504-594 (VANA…VQPE), 600-688 (QADA…VKEE), and 694-785 (IAKI…VKPD). Residues 933 to 953 (VIIATFVIVVALGILSWTVIC) form a helical membrane-spanning segment. At 954–1049 (CCKRQKGKPK…KARSPREEIL (96 aa)) the chain is on the cytoplasmic side. Residue T974 is modified to Phosphothreonine. Phosphoserine occurs at positions 978, 1009, and 1031. A disordered region spans residues 1022–1049 (GKLLHGQNGSVPNGQTPLKARSPREEIL). The span at 1028 to 1037 (QNGSVPNGQT) shows a compositional bias: polar residues. Residue T1037 is modified to Phosphothreonine.

As to quaternary structure, interacts with RTN4R. In terms of processing, N-glycosylated.

The protein resides in the cytoplasmic granule membrane. It localises to the golgi apparatus membrane. The protein localises to the golgi apparatus. Its subcellular location is the trans-Golgi network membrane. It is found in the cell membrane. Its function is as follows. Possible role in axon guidance through interaction with RTN4R. This is Dyslexia-associated protein KIAA0319-like protein from Pongo abelii (Sumatran orangutan).